The chain runs to 381 residues: Alkanesulfonate monooxygenase (381 aa).

This sequence belongs to the SsuD family. Homotetramer.

The catalysed reaction is an alkanesulfonate + FMNH2 + O2 = an aldehyde + FMN + sulfite + H2O + 2 H(+). Catalyzes the desulfonation of aliphatic sulfonates. The protein is Alkanesulfonate monooxygenase of Escherichia coli O6:K15:H31 (strain 536 / UPEC).